Here is a 496-residue protein sequence, read N- to C-terminus: NADP-dependent glyceraldehyde-3-phosphate dehydrogenase (496 aa).

Residue Ala2 is modified to N-acetylalanine. At Thr4 the chain carries Phosphothreonine. Substrate contacts are provided by residues Arg116 and 169 to 170; that span reads NY. 3 residues coordinate NADP(+): Lys192, Thr195, and Asp230. Position 245 to 249 (245 to 249) interacts with NAD(+); sequence GGDTG. Glu264 functions as the Proton acceptor in the catalytic mechanism. Residue 297–299 participates in substrate binding; sequence RCT. The active-site Nucleophile is Cys298. Glu391 is an NADP(+) binding site. Arg451 is a substrate binding site.

It belongs to the aldehyde dehydrogenase family.

It localises to the cytoplasm. It catalyses the reaction D-glyceraldehyde 3-phosphate + NADP(+) + H2O = (2R)-3-phosphoglycerate + NADPH + 2 H(+). Its function is as follows. Important as a means of generating NADPH for biosynthetic reactions. In Arabidopsis thaliana (Mouse-ear cress), this protein is NADP-dependent glyceraldehyde-3-phosphate dehydrogenase (ALDH11A3).